The following is a 487-amino-acid chain: Aspartyl/glutamyl-tRNA(Asn/Gln) amidotransferase subunit B (487 aa).

Belongs to the GatB/GatE family. GatB subfamily. As to quaternary structure, heterotrimer of A, B and C subunits.

The enzyme catalyses L-glutamyl-tRNA(Gln) + L-glutamine + ATP + H2O = L-glutaminyl-tRNA(Gln) + L-glutamate + ADP + phosphate + H(+). The catalysed reaction is L-aspartyl-tRNA(Asn) + L-glutamine + ATP + H2O = L-asparaginyl-tRNA(Asn) + L-glutamate + ADP + phosphate + 2 H(+). In terms of biological role, allows the formation of correctly charged Asn-tRNA(Asn) or Gln-tRNA(Gln) through the transamidation of misacylated Asp-tRNA(Asn) or Glu-tRNA(Gln) in organisms which lack either or both of asparaginyl-tRNA or glutaminyl-tRNA synthetases. The reaction takes place in the presence of glutamine and ATP through an activated phospho-Asp-tRNA(Asn) or phospho-Glu-tRNA(Gln). This Acidiphilium cryptum (strain JF-5) protein is Aspartyl/glutamyl-tRNA(Asn/Gln) amidotransferase subunit B.